Here is a 286-residue protein sequence, read N- to C-terminus: Pyridoxal kinase PdxY (286 aa).

Substrate is bound by residues Ser-9 and 44-45 (TQ). Residues Asp-111, Ala-143, Glu-148, Lys-181, and 208-211 (RPLV) contribute to the ATP site. Asp-222 is a binding site for substrate.

This sequence belongs to the pyridoxine kinase family. PdxY subfamily. As to quaternary structure, homodimer. The cofactor is Mg(2+).

The catalysed reaction is pyridoxal + ATP = pyridoxal 5'-phosphate + ADP + H(+). Its pathway is cofactor metabolism; pyridoxal 5'-phosphate salvage; pyridoxal 5'-phosphate from pyridoxal: step 1/1. In terms of biological role, pyridoxal kinase involved in the salvage pathway of pyridoxal 5'-phosphate (PLP). Catalyzes the phosphorylation of pyridoxal to PLP. This Pectobacterium atrosepticum (strain SCRI 1043 / ATCC BAA-672) (Erwinia carotovora subsp. atroseptica) protein is Pyridoxal kinase PdxY.